The primary structure comprises 239 residues: Putative CRISPR-associated endoribonuclease-like protein Cas6nc (239 aa).

Belongs to the CRISPR-associated protein Cas6/Cse3/CasE family. As to quaternary structure, monomer; homodimer when crystallized in the presence of crRNA. Varying the crRNA sequence varies degree of oligomerization and structure.

Functionally, CRISPR (clustered regularly interspaced short palindromic repeat), is an adaptive immune system that provides protection against mobile genetic elements (viruses, transposable elements and conjugative plasmids). CRISPR clusters contain sequences complementary to antecedent mobile elements and target invading nucleic acids. CRISPR clusters are transcribed and processed into CRISPR RNA (crRNA), also called psiRNA (prokaryotic silencing) in this organism (Potential). This chain is Putative CRISPR-associated endoribonuclease-like protein Cas6nc (cas6nc), found in Pyrococcus horikoshii (strain ATCC 700860 / DSM 12428 / JCM 9974 / NBRC 100139 / OT-3).